An 82-amino-acid chain; its full sequence is ATP synthase subunit c, chloroplastic (82 aa).

Transmembrane regions (helical) follow at residues 3–23 and 57–77; these read PLIC…GAIG and LAFM…LMFA.

Belongs to the ATPase C chain family. F-type ATPases have 2 components, F(1) - the catalytic core - and F(0) - the membrane proton channel. F(1) has five subunits: alpha(3), beta(3), gamma(1), delta(1), epsilon(1). F(0) has four main subunits: a(1), b(1), b'(1) and c(10-14). The alpha and beta chains form an alternating ring which encloses part of the gamma chain. F(1) is attached to F(0) by a central stalk formed by the gamma and epsilon chains, while a peripheral stalk is formed by the delta, b and b' chains.

Its subcellular location is the plastid. It is found in the chloroplast thylakoid membrane. Its function is as follows. F(1)F(0) ATP synthase produces ATP from ADP in the presence of a proton or sodium gradient. F-type ATPases consist of two structural domains, F(1) containing the extramembraneous catalytic core and F(0) containing the membrane proton channel, linked together by a central stalk and a peripheral stalk. During catalysis, ATP synthesis in the catalytic domain of F(1) is coupled via a rotary mechanism of the central stalk subunits to proton translocation. Key component of the F(0) channel; it plays a direct role in translocation across the membrane. A homomeric c-ring of between 10-14 subunits forms the central stalk rotor element with the F(1) delta and epsilon subunits. This chain is ATP synthase subunit c, chloroplastic, found in Ostreococcus tauri.